Reading from the N-terminus, the 508-residue chain is Photosystem II CP47 reaction center protein (508 aa).

A run of 6 helical transmembrane segments spans residues 21–36, 101–115, 140–156, 203–218, 237–252, and 457–472; these read SVHIMHTGLVSGWAGS, IILAGLMFLASMWHW, GIHLFLSGLLCFGFGAF, IAAGILGILAGLFHLS, VLSSSIAAVFWAAFVV, and CFALLFFFGHIWHGAR.

The protein belongs to the PsbB/PsbC family. PsbB subfamily. In terms of assembly, PSII is composed of 1 copy each of membrane proteins PsbA, PsbB, PsbC, PsbD, PsbE, PsbF, PsbH, PsbI, PsbJ, PsbK, PsbL, PsbM, PsbT, PsbX, PsbY, PsbZ, Psb30/Ycf12, at least 3 peripheral proteins of the oxygen-evolving complex and a large number of cofactors. It forms dimeric complexes. Binds multiple chlorophylls. PSII binds additional chlorophylls, carotenoids and specific lipids. serves as cofactor.

Its subcellular location is the plastid. The protein localises to the chloroplast thylakoid membrane. Its function is as follows. One of the components of the core complex of photosystem II (PSII). It binds chlorophyll and helps catalyze the primary light-induced photochemical processes of PSII. PSII is a light-driven water:plastoquinone oxidoreductase, using light energy to abstract electrons from H(2)O, generating O(2) and a proton gradient subsequently used for ATP formation. The chain is Photosystem II CP47 reaction center protein from Mesostigma viride (Green alga).